The chain runs to 235 residues: Large ribosomal subunit protein uL1 (235 aa).

This sequence belongs to the universal ribosomal protein uL1 family. Part of the 50S ribosomal subunit.

In terms of biological role, binds directly to 23S rRNA. The L1 stalk is quite mobile in the ribosome, and is involved in E site tRNA release. Its function is as follows. Protein L1 is also a translational repressor protein, it controls the translation of the L11 operon by binding to its mRNA. The polypeptide is Large ribosomal subunit protein uL1 (Synechococcus sp. (strain CC9902)).